We begin with the raw amino-acid sequence, 293 residues long: Glycine--tRNA ligase alpha subunit (293 aa).

It belongs to the class-II aminoacyl-tRNA synthetase family. In terms of assembly, tetramer of two alpha and two beta subunits.

Its subcellular location is the cytoplasm. It catalyses the reaction tRNA(Gly) + glycine + ATP = glycyl-tRNA(Gly) + AMP + diphosphate. This chain is Glycine--tRNA ligase alpha subunit, found in Acaryochloris marina (strain MBIC 11017).